The sequence spans 160 residues: Ribosomal RNA large subunit methyltransferase H (160 aa).

Residues L76, G108, and 127–132 (LGKMTW) contribute to the S-adenosyl-L-methionine site.

It belongs to the RNA methyltransferase RlmH family. As to quaternary structure, homodimer.

It is found in the cytoplasm. It carries out the reaction pseudouridine(1915) in 23S rRNA + S-adenosyl-L-methionine = N(3)-methylpseudouridine(1915) in 23S rRNA + S-adenosyl-L-homocysteine + H(+). In terms of biological role, specifically methylates the pseudouridine at position 1915 (m3Psi1915) in 23S rRNA. The sequence is that of Ribosomal RNA large subunit methyltransferase H from Rhizobium meliloti (strain 1021) (Ensifer meliloti).